The following is a 206-amino-acid chain: Protein-methionine-sulfoxide reductase heme-binding subunit MsrQ (206 aa).

The next 4 membrane-spanning stretches (helical) occupy residues 8–28 (IVWLKVLLHLAGLLPFLWLVW), 82–102 (LWCFAWATLHLTSYALLELGI), 116–136 (PYLTLGIISWFILFALTLTST), and 153–173 (FVYLVAILAPIHYLWSVKILS).

It belongs to the MsrQ family. Heterodimer of a catalytic subunit (MsrP) and a heme-binding subunit (MsrQ). Requires FMN as cofactor. The cofactor is heme b.

Its subcellular location is the cell inner membrane. In terms of biological role, part of the MsrPQ system that repairs oxidized periplasmic proteins containing methionine sulfoxide residues (Met-O), using respiratory chain electrons. Thus protects these proteins from oxidative-stress damage caused by reactive species of oxygen and chlorine generated by the host defense mechanisms. MsrPQ is essential for the maintenance of envelope integrity under bleach stress, rescuing a wide series of structurally unrelated periplasmic proteins from methionine oxidation. MsrQ provides electrons for reduction to the reductase catalytic subunit MsrP, using the quinone pool of the respiratory chain. The sequence is that of Protein-methionine-sulfoxide reductase heme-binding subunit MsrQ from Citrobacter koseri (strain ATCC BAA-895 / CDC 4225-83 / SGSC4696).